We begin with the raw amino-acid sequence, 74 residues long: Transcription attenuation protein MtrB (74 aa).

The protein belongs to the MtrB family. As to quaternary structure, oligomer of 11 identical subunits arranged in doughnut-like structure.

In terms of biological role, required for transcription attenuation control in the Trp operon. This trans-acting factor seems to recognize a 10 bases nucleotide sequence in the Trp leader transcript causing transcription termination. Binds the leader RNA only in presence of L-tryptophan. The chain is Transcription attenuation protein MtrB from Geobacillus sp. (strain WCH70).